We begin with the raw amino-acid sequence, 152 residues long: 6,7-dimethyl-8-ribityllumazine synthase (152 aa).

5-amino-6-(D-ribitylamino)uracil-binding positions include F21, 55 to 57, and 79 to 81; these read AFE and CVI. 84–85 contacts (2S)-2-hydroxy-3-oxobutyl phosphate; the sequence is ST. Catalysis depends on H87, which acts as the Proton donor. F112 is a binding site for 5-amino-6-(D-ribitylamino)uracil. Residue R126 participates in (2S)-2-hydroxy-3-oxobutyl phosphate binding.

It belongs to the DMRL synthase family. In terms of assembly, forms an icosahedral capsid composed of 60 subunits, arranged as a dodecamer of pentamers.

The catalysed reaction is (2S)-2-hydroxy-3-oxobutyl phosphate + 5-amino-6-(D-ribitylamino)uracil = 6,7-dimethyl-8-(1-D-ribityl)lumazine + phosphate + 2 H2O + H(+). Its pathway is cofactor biosynthesis; riboflavin biosynthesis; riboflavin from 2-hydroxy-3-oxobutyl phosphate and 5-amino-6-(D-ribitylamino)uracil: step 1/2. Functionally, catalyzes the formation of 6,7-dimethyl-8-ribityllumazine by condensation of 5-amino-6-(D-ribitylamino)uracil with 3,4-dihydroxy-2-butanone 4-phosphate. This is the penultimate step in the biosynthesis of riboflavin. The chain is 6,7-dimethyl-8-ribityllumazine synthase from Staphylococcus saprophyticus subsp. saprophyticus (strain ATCC 15305 / DSM 20229 / NCIMB 8711 / NCTC 7292 / S-41).